The primary structure comprises 314 residues: Olfactory receptor 1468 (314 aa).

Over 1–25 (MTEENQTVISQFLLLGLPIPSEHQH) the chain is Extracellular. An N-linked (GlcNAc...) asparagine glycan is attached at N5. Residues 26–49 (VFYALFLSMYLTTVLGNLIIIILI) traverse the membrane as a helical segment. Residues 50–57 (HLDSHLHT) lie on the Cytoplasmic side of the membrane. A helical membrane pass occupies residues 58–79 (PMYLFLSNLSFSDLCFSSVTMP). Topologically, residues 80–100 (KLLQNMQSQVPSIPFAGCLTQ) are extracellular. A disulfide bridge links C97 with C189. The chain crosses the membrane as a helical span at residues 101-120 (LYFYLYFADLESFLLVAMAY). The Cytoplasmic portion of the chain corresponds to 121-139 (DRYVAICFPLHYMSIMSPK). The helical transmembrane segment at 140-158 (LCVSLVVLSWVLTTFHAML) threads the bilayer. Residues 159 to 196 (HTLLMARLSFCADNMIPHFFCDISPLLKLSCSDTHVNE) are Extracellular-facing. Residues 197 to 219 (LVIFVMGGLVIVIPFVLIIVSYA) form a helical membrane-spanning segment. The Cytoplasmic segment spans residues 220–236 (RVVASILKVPSVRGIHK). A helical transmembrane segment spans residues 237 to 260 (IFSTCGSHLSVVSLFYGTIIGLYL). Topologically, residues 261-272 (CPSANNSTVKET) are extracellular. The chain crosses the membrane as a helical span at residues 273-292 (VMAMMYTVVTPMLNPFIYSL). The Cytoplasmic segment spans residues 293–314 (RNRDMKEALIRVLCKKKITFCL).

The protein belongs to the G-protein coupled receptor 1 family. In terms of tissue distribution, olfactory epithelium.

Its subcellular location is the cell membrane. Functionally, odorant receptor. The sequence is that of Olfactory receptor 1468 (Olr1468) from Rattus norvegicus (Rat).